A 274-amino-acid polypeptide reads, in one-letter code: 2,3,4,5-tetrahydropyridine-2,6-dicarboxylate N-succinyltransferase (274 aa).

Substrate is bound by residues Arg104 and Asp141.

This sequence belongs to the transferase hexapeptide repeat family. As to quaternary structure, homotrimer.

It localises to the cytoplasm. The enzyme catalyses (S)-2,3,4,5-tetrahydrodipicolinate + succinyl-CoA + H2O = (S)-2-succinylamino-6-oxoheptanedioate + CoA. It participates in amino-acid biosynthesis; L-lysine biosynthesis via DAP pathway; LL-2,6-diaminopimelate from (S)-tetrahydrodipicolinate (succinylase route): step 1/3. The polypeptide is 2,3,4,5-tetrahydropyridine-2,6-dicarboxylate N-succinyltransferase (Salmonella arizonae (strain ATCC BAA-731 / CDC346-86 / RSK2980)).